The following is a 1018-amino-acid chain: Cell wall protein 1 (1018 aa).

The first 17 residues, 1–17, serve as a signal peptide directing secretion; it reads MLPSIVISIVLASFVSA. Positions 32–143 constitute a CFEM 1 domain; it reads NPYTIYPSVA…SSLSAAATAV (112 aa). 4 disulfide bridges follow: Cys-60-Cys-100, Cys-64-Cys-95, Cys-74-Cys-81, and Cys-83-Cys-116. Asp-78 is a binding site for heme. The tract at residues 147-227 is disordered; it reads SEQPVETSSE…STPEDNPYTI (81 aa). The span at 148 to 164 shows a compositional bias: polar residues; that stretch reads EQPVETSSEPAGSSQSV. A compositionally biased stretch (low complexity) spans 165-221; it reads ESSQPAETSSSEPAETSSSEPAETSSETSSEQPASSEPAETSSEESSTITSAPSTPE. 2 CFEM domains span residues 223–334 and 393–504; these read NPYT…ATAV and SSSS…ATAV. 4 disulfides stabilise this stretch: Cys-251/Cys-291, Cys-255/Cys-286, Cys-265/Cys-272, and Cys-274/Cys-307. Asp-269 is a heme binding site. The interval 338 to 396 is disordered; sequence SEQSVETSSESAESSQSVESSQPAETSSEQPSETSSETSSQQLSSITSAPDSSATSSSS. 4 disulfides stabilise this stretch: Cys-421-Cys-461, Cys-425-Cys-456, Cys-435-Cys-442, and Cys-444-Cys-477. Position 439 (Asp-439) interacts with heme. The segment at 507–557 is disordered; the sequence is SDSASETASQEPSETSSEQPSETASQQPAETSSEESSTITSAPSTPEDNPY. The span at 509–553 shows a compositional bias: low complexity; that stretch reads SASETASQEPSETSSEQPSETASQQPAETSSEESSTITSAPSTPE. A CFEM 4 domain is found at 555–666; that stretch reads NPYTIYPSVA…SSLNAAATAV (112 aa). Disulfide bonds link Cys-583/Cys-623, Cys-587/Cys-618, Cys-597/Cys-604, and Cys-606/Cys-639. Asp-601 is a binding site for heme. Residues 677–785 are disordered; sequence SASESASQVP…STSTKSDAAS (109 aa). Residues 690 to 766 show a composition bias toward low complexity; it reads SAASSQSANN…AISESVAPSS (77 aa). Asn-698, Asn-708, Asn-718, Asn-729, Asn-743, Asn-753, Asn-769, Asn-798, and Asn-965 each carry an N-linked (GlcNAc...) asparagine glycan. The span at 767–785 shows a compositional bias: polar residues; the sequence is YGNSTIAQPSTSTKSDAAS. The GPI-anchor amidated serine moiety is linked to residue Ser-989. The propeptide at 990-1018 is removed in mature form; that stretch reads VAIANMANTKFASTMSLLVASFVFVGLFI.

Belongs to the RBT5 family. In terms of processing, the GPI-anchor is attached to the protein in the endoplasmic reticulum and serves to target the protein to the cell surface. There, the glucosamine-inositol phospholipid moiety is cleaved off and the GPI-modified mannoprotein is covalently attached via its lipidless GPI glycan remnant to the 1,6-beta-glucan of the outer cell wall layer.

It localises to the secreted. The protein resides in the cell wall. Its subcellular location is the membrane. In terms of biological role, heme-binding protein involved in heme-iron utilization. The ability to acquire iron from host tissues is a major virulence factor of pathogenic microorganisms. Required for biofilm formation. The chain is Cell wall protein 1 (CSA1) from Candida albicans (strain SC5314 / ATCC MYA-2876) (Yeast).